The primary structure comprises 71 residues: Gas vesicle protein A (71 aa).

Residues Leu-12–Lys-22 are alpha helix 1. The beta-strand 1 stretch occupies residues Val-26–Leu-34. A beta turn region spans residues Val-35–Ile-37. The tract at residues Glu-38–Ile-46 is beta-strand 2. Residues Val-51–Pro-70 form an alpha helix 2 region.

This sequence belongs to the gas vesicle GvpA family. As to quaternary structure, the gas vesicle shell is 2 nm thick and consists of a single layer of this protein. It forms helical ribs nearly perpendicular to the long axis of the vesicle.

The protein resides in the gas vesicle shell. In terms of biological role, gas vesicles are hollow, gas filled proteinaceous nanostructures found in some microorganisms. During planktonic growth they allow positioning of the organism at a favorable depth for light or nutrient acquisition. GvpA forms the protein shell. In Microchaete diplosiphon (Fremyella diplosiphon), this protein is Gas vesicle protein A.